Here is a 355-residue protein sequence, read N- to C-terminus: Na(+)/H(+) exchange regulatory cofactor NHE-RF1 (355 aa).

S2 carries the post-translational modification N-acetylserine. Residues S2 and S46 each carry the phosphoserine modification. The PDZ 1 domain occupies 14 to 94 (LCCLEKGPNG…AVRLLVVDPE (81 aa)). 2 stretches are compositionally biased toward basic and acidic residues: residues 110 to 119 (LLRPQEKSEQ) and 127 to 146 (DTHE…RELR). Residues 110–146 (LLRPQEKSEQAEPPAAADTHEAGDQNEAEKSHLRELR) are disordered. One can recognise a PDZ 2 domain in the interval 149–229 (LCTMKKGPNG…EAKLLVVDKE (81 aa)). A disordered region spans residues 244–355 (EHLDGPLPEP…SKKNELFSNL (112 aa)). Basic and acidic residues predominate over residues 259-268 (IQKESSREAL). Residues S264, S275, S285, and S286 each carry the phosphoserine modification. Over residues 270-286 (EPASESPRPALARSASS) the composition is skewed to low complexity. Phosphothreonine is present on T288. Residues S289, S294, and S297 each carry the phosphoserine modification. Low complexity predominate over residues 303–323 (STEPSSTSSSSSDPILDLNIS). Over residues 345–355 (WSKKNELFSNL) the composition is skewed to basic and acidic residues.

In terms of assembly, homodimer, and heterodimer with NHERF2. Binds the N-termini of EZR, RDX and MSN. Binds the C-termini of PDGFRA, PDGFRB, ADRB2 and NOS2. Binds ARHGAP17, EPI64, RACK1, OPRK1, GNAQ, CTNNB1, PLCB3 and CLCN3. Forms a complex with CFTR and SLC4A7. Forms a complex with SLC4A7 and ATP6V1B1. Binds PDZK1. Binds the C-terminus of PAG1. In resting T-cells, part of a PAG1-NHERF1-MSN complex which is disrupted upon TCR activation. Directly interacts with HTR4. Interacts with MCC. Interacts with TRPC4 (via the PDZ-binding domain). Interacts (via the PDZ 1 domain) with PODXL (via the C-terminal PDZ-binding motif DTHL); interaction is not detected in glomerular epithelium cells. Interacts (via the PDZ 1 domain) with PODXL (via the C-terminal PDZ-binding motif DTHL); the interaction take place early in the secretory pathway and is necessary for its apical membrane sorting. Interacts with SLC34A1. Interacts with CFTR, SLC26A3 and SLC26A6. Interacts (via PDZ domains) with ACE2 (via PDZ-binding motif); the interaction may enhance ACE2 membrane residence. In terms of tissue distribution, expressed in spermatogenic cells.

The protein resides in the cytoplasm. It is found in the apical cell membrane. The protein localises to the cell projection. Its subcellular location is the filopodium. It localises to the ruffle. The protein resides in the microvillus. It is found in the endomembrane system. In terms of biological role, scaffold protein that connects plasma membrane proteins with members of the ezrin/moesin/radixin family and thereby helps to link them to the actin cytoskeleton and to regulate their surface expression. Necessary for recycling of internalized ADRB2. Was first known to play a role in the regulation of the activity and subcellular location of SLC9A3. Necessary for cAMP-mediated phosphorylation and inhibition of SLC9A3. May enhance Wnt signaling. May participate in HTR4 targeting to microvilli. Involved in the regulation of phosphate reabsorption in the renal proximal tubules. Involved in sperm capacitation. May participate in the regulation of the chloride and bicarbonate homeostasis in spermatozoa. This Mus musculus (Mouse) protein is Na(+)/H(+) exchange regulatory cofactor NHE-RF1 (Nherf1).